Here is a 169-residue protein sequence, read N- to C-terminus: S-ribosylhomocysteine lyase (169 aa).

Fe cation contacts are provided by His-54, His-58, and Cys-128.

It belongs to the LuxS family. Homodimer. Requires Fe cation as cofactor.

The enzyme catalyses S-(5-deoxy-D-ribos-5-yl)-L-homocysteine = (S)-4,5-dihydroxypentane-2,3-dione + L-homocysteine. In terms of biological role, involved in the synthesis of autoinducer 2 (AI-2) which is secreted by bacteria and is used to communicate both the cell density and the metabolic potential of the environment. The regulation of gene expression in response to changes in cell density is called quorum sensing. Catalyzes the transformation of S-ribosylhomocysteine (RHC) to homocysteine (HC) and 4,5-dihydroxy-2,3-pentadione (DPD). The polypeptide is S-ribosylhomocysteine lyase (Shewanella sp. (strain MR-7)).